The following is an 87-amino-acid chain: Cell division topological specificity factor (87 aa).

Belongs to the MinE family.

Prevents the cell division inhibition by proteins MinC and MinD at internal division sites while permitting inhibition at polar sites. This ensures cell division at the proper site by restricting the formation of a division septum at the midpoint of the long axis of the cell. This Vibrio vulnificus (strain CMCP6) protein is Cell division topological specificity factor.